Consider the following 370-residue polypeptide: 3-dehydroquinate synthase (370 aa).

Residues 108 to 112 (GVIGD), 132 to 133 (TT), Lys145, and Lys154 each bind NAD(+). The Zn(2+) site is built by Glu187, His249, and His267.

The protein belongs to the sugar phosphate cyclases superfamily. Dehydroquinate synthase family. Co(2+) is required as a cofactor. Requires Zn(2+) as cofactor. It depends on NAD(+) as a cofactor.

It localises to the cytoplasm. The catalysed reaction is 7-phospho-2-dehydro-3-deoxy-D-arabino-heptonate = 3-dehydroquinate + phosphate. It participates in metabolic intermediate biosynthesis; chorismate biosynthesis; chorismate from D-erythrose 4-phosphate and phosphoenolpyruvate: step 2/7. Its function is as follows. Catalyzes the conversion of 3-deoxy-D-arabino-heptulosonate 7-phosphate (DAHP) to dehydroquinate (DHQ). The protein is 3-dehydroquinate synthase of Cereibacter sphaeroides (strain ATCC 17023 / DSM 158 / JCM 6121 / CCUG 31486 / LMG 2827 / NBRC 12203 / NCIMB 8253 / ATH 2.4.1.) (Rhodobacter sphaeroides).